A 639-amino-acid polypeptide reads, in one-letter code: Mediator of RNA polymerase II transcription subunit 17 (639 aa).

Positions 160–187 form a coiled coil; the sequence is RLQNFNAAADKLLKSASRLENEVASETR.

It belongs to the Mediator complex subunit 17 family. As to quaternary structure, component of the Mediator complex.

The protein resides in the nucleus. Functionally, component of the Mediator complex, a coactivator involved in the regulated transcription of nearly all RNA polymerase II-dependent genes. Mediator functions as a bridge to convey information from gene-specific regulatory proteins to the basal RNA polymerase II transcription machinery. Mediator is recruited to promoters by direct interactions with regulatory proteins and serves as a scaffold for the assembly of a functional preinitiation complex with RNA polymerase II and the general transcription factors. The chain is Mediator of RNA polymerase II transcription subunit 17 (srb4) from Neosartorya fischeri (strain ATCC 1020 / DSM 3700 / CBS 544.65 / FGSC A1164 / JCM 1740 / NRRL 181 / WB 181) (Aspergillus fischerianus).